The sequence spans 359 residues: Photosystem II protein D1 1 (359 aa).

Helical transmembrane passes span 29-46 (YVGW…AATT), 118-133 (HFLI…EWEL), and 142-156 (WICI…AASA). H118 serves as a coordination point for chlorophyll a. A pheophytin a-binding site is contributed by Y126. [CaMn4O5] cluster contacts are provided by D170 and E189. Residues 197–218 (FHMLGVAGVFGGSLFSAMHGSL) traverse the membrane as a helical segment. H198 contacts chlorophyll a. A quinone-binding positions include H215 and 264-265 (SF). Position 215 (H215) interacts with Fe cation. Residue H272 coordinates Fe cation. The chain crosses the membrane as a helical span at residues 274–288 (FLAAWPVVGIWFTAL). Residues H332, E333, D342, and A344 each contribute to the [CaMn4O5] cluster site. A propeptide spanning residues 345–359 (AAESAPVALQAPAIG) is cleaved from the precursor.

This sequence belongs to the reaction center PufL/M/PsbA/D family. In terms of assembly, PSII is composed of 1 copy each of membrane proteins PsbA, PsbB, PsbC, PsbD, PsbE, PsbF, PsbH, PsbI, PsbJ, PsbK, PsbL, PsbM, PsbT, PsbX, PsbY, PsbZ, Psb30/Ycf12, peripheral proteins PsbO, CyanoQ (PsbQ), PsbU, PsbV and a large number of cofactors. It forms dimeric complexes. The D1/D2 heterodimer binds P680, chlorophylls that are the primary electron donor of PSII, and subsequent electron acceptors. It shares a non-heme iron and each subunit binds pheophytin, quinone, additional chlorophylls, carotenoids and lipids. D1 provides most of the ligands for the Mn4-Ca-O5 cluster of the oxygen-evolving complex (OEC). There is also a Cl(-1) ion associated with D1 and D2, which is required for oxygen evolution. The PSII complex binds additional chlorophylls, carotenoids and specific lipids. serves as cofactor. In terms of processing, tyr-161 forms a radical intermediate that is referred to as redox-active TyrZ, YZ or Y-Z. Post-translationally, C-terminally processed by CtpA; processing is essential to allow assembly of the oxygen-evolving complex and thus photosynthetic growth.

Its subcellular location is the cellular thylakoid membrane. It catalyses the reaction 2 a plastoquinone + 4 hnu + 2 H2O = 2 a plastoquinol + O2. In terms of biological role, photosystem II (PSII) is a light-driven water:plastoquinone oxidoreductase that uses light energy to abstract electrons from H(2)O, generating O(2) and a proton gradient subsequently used for ATP formation. It consists of a core antenna complex that captures photons, and an electron transfer chain that converts photonic excitation into a charge separation. The D1/D2 (PsbA/PsbD) reaction center heterodimer binds P680, the primary electron donor of PSII as well as several subsequent electron acceptors. The protein is Photosystem II protein D1 1 of Synechococcus sp. (strain RCC307).